Reading from the N-terminus, the 130-residue chain is Small ribosomal subunit protein uS9 (130 aa).

This sequence belongs to the universal ribosomal protein uS9 family.

The polypeptide is Small ribosomal subunit protein uS9 (Xanthomonas oryzae pv. oryzae (strain MAFF 311018)).